The following is a 328-amino-acid chain: Glycerol-3-phosphate dehydrogenase [NAD(P)+] (328 aa).

Tryptophan 11, arginine 30, and lysine 103 together coordinate NADPH. The sn-glycerol 3-phosphate site is built by lysine 103, glycine 132, and serine 134. Alanine 136 provides a ligand contact to NADPH. The sn-glycerol 3-phosphate site is built by lysine 187, aspartate 240, serine 250, arginine 251, and asparagine 252. The active-site Proton acceptor is lysine 187. Arginine 251 contributes to the NADPH binding site. 2 residues coordinate NADPH: valine 275 and glutamate 277.

The protein belongs to the NAD-dependent glycerol-3-phosphate dehydrogenase family.

It is found in the cytoplasm. The catalysed reaction is sn-glycerol 3-phosphate + NAD(+) = dihydroxyacetone phosphate + NADH + H(+). The enzyme catalyses sn-glycerol 3-phosphate + NADP(+) = dihydroxyacetone phosphate + NADPH + H(+). The protein operates within membrane lipid metabolism; glycerophospholipid metabolism. Catalyzes the reduction of the glycolytic intermediate dihydroxyacetone phosphate (DHAP) to sn-glycerol 3-phosphate (G3P), the key precursor for phospholipid synthesis. The polypeptide is Glycerol-3-phosphate dehydrogenase [NAD(P)+] (Thiobacillus denitrificans (strain ATCC 25259 / T1)).